A 435-amino-acid chain; its full sequence is NADH-quinone oxidoreductase subunit D (435 aa).

Belongs to the complex I 49 kDa subunit family. As to quaternary structure, NDH-1 is composed of 14 different subunits. Subunits NuoB, C, D, E, F, and G constitute the peripheral sector of the complex.

It is found in the cell inner membrane. It carries out the reaction a quinone + NADH + 5 H(+)(in) = a quinol + NAD(+) + 4 H(+)(out). Functionally, NDH-1 shuttles electrons from NADH, via FMN and iron-sulfur (Fe-S) centers, to quinones in the respiratory chain. The immediate electron acceptor for the enzyme in this species is believed to be ubiquinone. Couples the redox reaction to proton translocation (for every two electrons transferred, four hydrogen ions are translocated across the cytoplasmic membrane), and thus conserves the redox energy in a proton gradient. The chain is NADH-quinone oxidoreductase subunit D from Xanthomonas axonopodis pv. citri (strain 306).